The primary structure comprises 72 residues: Translation initiation factor IF-1 (72 aa).

Residues 1-72 (MAKEDVIEFS…TKGRITFRYK (72 aa)) enclose the S1-like domain.

This sequence belongs to the IF-1 family. In terms of assembly, component of the 30S ribosomal translation pre-initiation complex which assembles on the 30S ribosome in the order IF-2 and IF-3, IF-1 and N-formylmethionyl-tRNA(fMet); mRNA recruitment can occur at any time during PIC assembly.

It is found in the cytoplasm. One of the essential components for the initiation of protein synthesis. Stabilizes the binding of IF-2 and IF-3 on the 30S subunit to which N-formylmethionyl-tRNA(fMet) subsequently binds. Helps modulate mRNA selection, yielding the 30S pre-initiation complex (PIC). Upon addition of the 50S ribosomal subunit IF-1, IF-2 and IF-3 are released leaving the mature 70S translation initiation complex. The chain is Translation initiation factor IF-1 from Paramagnetospirillum magneticum (strain ATCC 700264 / AMB-1) (Magnetospirillum magneticum).